Consider the following 118-residue polypeptide: Small ribosomal subunit protein uS13 (118 aa).

Residues 94–118 (NLPVRGQNTKNNARTRKGPIRSIKR) are disordered. Positions 106 to 118 (ARTRKGPIRSIKR) are enriched in basic residues.

The protein belongs to the universal ribosomal protein uS13 family. As to quaternary structure, part of the 30S ribosomal subunit. Forms a loose heterodimer with protein S19. Forms two bridges to the 50S subunit in the 70S ribosome.

Functionally, located at the top of the head of the 30S subunit, it contacts several helices of the 16S rRNA. In the 70S ribosome it contacts the 23S rRNA (bridge B1a) and protein L5 of the 50S subunit (bridge B1b), connecting the 2 subunits; these bridges are implicated in subunit movement. Contacts the tRNAs in the A and P-sites. The sequence is that of Small ribosomal subunit protein uS13 from Psychrobacter sp. (strain PRwf-1).